An 880-amino-acid polypeptide reads, in one-letter code: Endoglucanase E-4 (880 aa).

The signal sequence occupies residues 1-46 (MSVTEPPPRRRGRHSRARRFLTSLGATAALTAGMLGVPLATGTAHA). Asp104 functions as the Nucleophile in the catalytic mechanism. Active-site residues include His422, His427, Asp461, and Glu470. The CBM3 domain occupies 504 to 652 (PDGPEIFVEA…GVPVWGTAPE (149 aa)). The tract at residues 647–688 (WGTAPEEGEEPGGGEGPGGGEEPGEDVTPPSAPGSPAVRDVT) is disordered. A Fibronectin type-III domain is found at 678–770 (APGSPAVRDV…TVSFTTLAEN (93 aa)). Residues 771-880 (GGGPDASCTV…TLNGEPCALA (110 aa)) form the CBM2 domain.

Belongs to the glycosyl hydrolase 9 (cellulase E) family.

It carries out the reaction Endohydrolysis of (1-&gt;4)-beta-D-glucosidic linkages in cellulose, lichenin and cereal beta-D-glucans.. It functions in the pathway glycan metabolism; cellulose degradation. This chain is Endoglucanase E-4 (celD), found in Thermobifida fusca (Thermomonospora fusca).